The sequence spans 218 residues: dTTP/UTP pyrophosphatase (218 aa).

Residues M1–G10 show a composition bias toward polar residues. The segment at M1–L20 is disordered. The Proton acceptor role is filled by D87.

Belongs to the Maf family. YhdE subfamily. It depends on a divalent metal cation as a cofactor.

The protein localises to the cytoplasm. The catalysed reaction is dTTP + H2O = dTMP + diphosphate + H(+). The enzyme catalyses UTP + H2O = UMP + diphosphate + H(+). Functionally, nucleoside triphosphate pyrophosphatase that hydrolyzes dTTP and UTP. May have a dual role in cell division arrest and in preventing the incorporation of modified nucleotides into cellular nucleic acids. This Gluconobacter oxydans (strain 621H) (Gluconobacter suboxydans) protein is dTTP/UTP pyrophosphatase.